We begin with the raw amino-acid sequence, 486 residues long: MTNTFYLLPVEIWVKIVNFSNETSLLLTNKEFFELSSLINVEQNIFEYVIRNDYWHILDYVSNLEKNKSEKYPIVCKFKEYTNDLFKYVIEFCISGKLDSIKRLVSMGANVREHNDVALNRAVENGHMDIFEYLISKGADLYANKNTLVRCASYGGNLDMVKYLISIGANFRENCDTPLIWACHNGHLEIVKYLVDQGADVNSQSHKSIITASKMGHLGIVKYLVSKTTNIDWRHNYAAAFAAQNNHLEIVKYLVNEGANLEIEDGCIIRVAAKNGHLDIVKYLVSLGMEIGFKKILIGTSNFGVVNKITPVIGSAVEGGHLSMVKYFVSIGATIKEKNYAFVKAAEYGHLEIIKYLVSQGISLEKKINKALIVACSKGHLEIVKYLVENGANVKTNEGLPLRQACWGNYLDIAKYLVSNGADVTSYDNYALKTALEKGDLETVKYFIYVGANVNDISSWDLKFISVLGRSEVLEYLKSTFNIKLS.

ANK repeat units lie at residues 84–113, 114–143, 145–173, 174–203, 205–233, 234–263, 265–293, 307–336, 337–366, 367–396, 398–426, and 427–456; these read DLFK…NVRE, HNDV…DLYA, KNTL…NFRE, NCDT…DVNS, SHKS…NIDW, RHNY…NLEI, DGCI…EIGF, NKIT…ATIK, EKNY…SLEK, KINK…NVKT, EGLP…DVTS, and YDNY…NVND.

The polypeptide is Putative ankyrin repeat protein R634 (Acanthamoeba polyphaga (Amoeba)).